Here is a 485-residue protein sequence, read N- to C-terminus: D-alanine--D-alanyl carrier protein ligase (485 aa).

Residue 144–145 (TS) coordinates ATP. Aspartate 189 provides a ligand contact to D-alanine. 284 to 289 (NTYGPT) contributes to the ATP binding site. Valine 293 contributes to the D-alanine binding site. Residues aspartate 365 and lysine 473 each coordinate ATP. Lysine 473 provides a ligand contact to D-alanine.

The protein belongs to the ATP-dependent AMP-binding enzyme family. DltA subfamily.

The protein localises to the cytoplasm. It carries out the reaction holo-[D-alanyl-carrier protein] + D-alanine + ATP = D-alanyl-[D-alanyl-carrier protein] + AMP + diphosphate. It functions in the pathway cell wall biogenesis; lipoteichoic acid biosynthesis. In terms of biological role, catalyzes the first step in the D-alanylation of lipoteichoic acid (LTA), the activation of D-alanine and its transfer onto the D-alanyl carrier protein (Dcp) DltC. In an ATP-dependent two-step reaction, forms a high energy D-alanyl-AMP intermediate, followed by transfer of the D-alanyl residue as a thiol ester to the phosphopantheinyl prosthetic group of the Dcp. D-alanylation of LTA plays an important role in modulating the properties of the cell wall in Gram-positive bacteria, influencing the net charge of the cell wall. This chain is D-alanine--D-alanyl carrier protein ligase, found in Staphylococcus aureus (strain USA300).